We begin with the raw amino-acid sequence, 281 residues long: ATP phosphoribosyltransferase (281 aa).

This sequence belongs to the ATP phosphoribosyltransferase family. Long subfamily. Mg(2+) is required as a cofactor.

The protein resides in the cytoplasm. The catalysed reaction is 1-(5-phospho-beta-D-ribosyl)-ATP + diphosphate = 5-phospho-alpha-D-ribose 1-diphosphate + ATP. Its pathway is amino-acid biosynthesis; L-histidine biosynthesis; L-histidine from 5-phospho-alpha-D-ribose 1-diphosphate: step 1/9. Feedback inhibited by histidine. Catalyzes the condensation of ATP and 5-phosphoribose 1-diphosphate to form N'-(5'-phosphoribosyl)-ATP (PR-ATP). Has a crucial role in the pathway because the rate of histidine biosynthesis seems to be controlled primarily by regulation of HisG enzymatic activity. The chain is ATP phosphoribosyltransferase from Corynebacterium jeikeium (strain K411).